The following is a 473-amino-acid chain: Argininosuccinate lyase (473 aa).

Ser34, Asn121, and Thr166 together coordinate 2-(N(omega)-L-arginino)succinate. His167 (proton acceptor) is an active-site residue. The active-site Proton donor is Ser289. 3 residues coordinate 2-(N(omega)-L-arginino)succinate: Asn297, Tyr329, and Gln334.

It belongs to the lyase 1 family. Argininosuccinate lyase subfamily.

It carries out the reaction 2-(N(omega)-L-arginino)succinate = fumarate + L-arginine. The protein operates within amino-acid biosynthesis; L-arginine biosynthesis; L-arginine from L-ornithine and carbamoyl phosphate: step 3/3. The sequence is that of Argininosuccinate lyase (ARG7) from Chlamydomonas reinhardtii (Chlamydomonas smithii).